A 555-amino-acid polypeptide reads, in one-letter code: 5'-nucleotidase-related protein (555 aa).

The first 25 residues, 1–25 (MKSLIGTLGLYCLFILTNNVVSSYG), serve as a signal peptide directing secretion. 3 residues coordinate a divalent metal cation: aspartate 38, histidine 40, and aspartate 91. An N-linked (GlcNAc...) asparagine glycan is attached at asparagine 105. Asparagine 123 serves as a coordination point for a divalent metal cation. Asparagine 198 carries an N-linked (GlcNAc...) asparagine glycan. Histidine 225 and histidine 249 together coordinate a divalent metal cation. An N-linked (GlcNAc...) asparagine glycan is attached at asparagine 295. AMP contacts are provided by arginine 358, arginine 402, and phenylalanine 421. An N-linked (GlcNAc...) asparagine glycan is attached at asparagine 465. AMP is bound by residues phenylalanine 505 and aspartate 511.

Belongs to the 5'-nucleotidase family. Mg(2+) serves as cofactor. The cofactor is Mn(2+). Salivary gland (at protein level). Saliva (at protein level).

The protein localises to the secreted. It carries out the reaction a ribonucleoside 5'-triphosphate + 2 H2O = a ribonucleoside 5'-phosphate + 2 phosphate + 2 H(+). Its activity is regulated as follows. DEPC (2 mM), sodium fluoride (10 mM) and 4,4'-Diisothiocyano-2,2'-stilbenedisulfonic acid (DIDS, 100 uM) nearly completely abrogate activity. Concanavalin A enhances activity. In terms of biological role, facilitates hematophagy by inhibiting ADP-dependent platelet aggregation and promoting disaggregation of ADP-stimulated platelets in the host. Cleaves adenosine triphosphate (ATP) and adenosine diphosphate (ADP) to adenosine monophosphate (AMP) and inorganic phosphate. Interacts with fibrinogen receptor integrin alpha-IIb/beta-3 (ITGA2B/ITGB3). This chain is 5'-nucleotidase-related protein, found in Glossina morsitans morsitans (Savannah tsetse fly).